Consider the following 443-residue polypeptide: Frizzled/smoothened-like sans CRD protein E (443 aa).

The first 23 residues, 1–23 (MISHIKKFINLYTIVFLLYILYS), serve as a signal peptide directing secretion. At 24 to 83 (NENFFVKGQKLPPGFCPSPLIYRNTTDRQSDIDIGFQFLGETNCVQPCPSLILTENEWNK) the chain is on the extracellular side. N-linked (GlcNAc...) asparagine glycosylation occurs at asparagine 47. Residues 84–104 (VFNMSLVAGTISMFALIFLII) form a helical membrane-spanning segment. Topologically, residues 105–120 (TYSPLVNNIKDYTRHT) are cytoplasmic. A helical transmembrane segment spans residues 121 to 141 (VGILFLFSGILIAMTTDGRQL). Over 142-166 (WDIDLGFKKYCPEPGRFARQSDSKC) the chain is Extracellular. A helical transmembrane segment spans residues 167–187 (LVTAIFFQFGCVTALLWWAAI). The Cytoplasmic portion of the chain corresponds to 188 to 203 (SVDLWITIKKIKISKK). The chain crosses the membrane as a helical span at residues 204 to 224 (LFIIYTIAVNIVTIVLTFGPV). The Extracellular segment spans residues 225–248 (GSKQYGYIDAAIGCWLMDLKYQVG). Residues 249-269 (YFWAPVGFCLCVGCVSIVLIL) form a helical membrane-spanning segment. Residues 270-289 (KEIYNVSDAVKKKLLAKHLK) lie on the Cytoplasmic side of the membrane. A helical transmembrane segment spans residues 290–310 (PLMLIILMLTEFIYMFIFYSY). Over 311-350 (TTSKKNHYHDIIEEYVVCLFVHAANPSVCKIGSTISPSAH) the chain is Extracellular. The helical transmembrane segment at 351–371 (FFFHLCIRLMGLEVLIFYGFT) threads the bilayer. Topologically, residues 372–443 (RQTRKIWMRS…SGIDDSKHDP (72 aa)) are cytoplasmic. Low complexity-rich tracts occupy residues 397–410 (SSSN…NKTS) and 419–432 (ESSE…QSIE). The tract at residues 397–443 (SSSNDSKSSNNKTSGRVTGGFGESSEQSNEPEQSIELSGIDDSKHDP) is disordered.

This sequence belongs to the G-protein coupled receptor Fz/Smo family.

It localises to the membrane. This is Frizzled/smoothened-like sans CRD protein E (fscE) from Dictyostelium discoideum (Social amoeba).